The following is a 171-amino-acid chain: Moubatin (171 aa).

An N-terminal signal peptide occupies residues 1-15 (MMLVLTTLIFSFSAS). 3 cysteine pairs are disulfide-bonded: Cys23-Cys144, Cys55-Cys166, and Cys118-Cys145.

This sequence belongs to the calycin superfamily. Lipocalin family. The N-terminus is blocked. As to expression, expressed in salivary glands.

The protein resides in the secreted. Functionally, tick salivary platelet aggregation inhibitor that plays an important part in the anti-hemostatic strategy of ticks. Acts by scavenging thromboxane A2 (TXA2), a potent inducer of platelet aggregation and blood vessel constriction. As a consequence, is a specific inhibitor of collagen-induced platelet aggregation. In addition, it also acts as a potent inhibitor of TXA2-mediated vasoconstriction. Has also been found to bind leukotriene B4 (LTB4) (which also derives from arachidonic acid, as TXA2) with affinities in the nanomolar range. It does not interact with complement protein C5. The protein is Moubatin of Ornithodoros moubata (Soft tick).